A 591-amino-acid chain; its full sequence is ATPase family AAA domain-containing protein 3A (591 aa).

Residues 1-52 (MSWLFGIKGPKGEGTGPPLPLPPAQPGAEGGGDRGAGDRPSPKDKWSNFDPT) are disordered. N-acetylserine is present on Ser2. Residues 2 to 49 (SWLFGIKGPKGEGTGPPLPLPPAQPGAEGGGDRGAGDRPSPKDKWSNF) are required for interaction with the inner surface of the mitochondrial outer membrane. At 2–245 (SWLFGIKGPK…FRAFVTDWDK (244 aa)) the chain is on the mitochondrial intermembrane side. Residues 31 to 47 (GGDRGAGDRPSPKDKWS) show a composition bias toward basic and acidic residues. The stretch at 55-216 (ERAAKAAREL…REQIRLKAAE (162 aa)) forms a coiled coil. A helical transmembrane segment spans residues 246–263 (VTATVAGLTLLAVGVYSA). Topologically, residues 264 to 586 (KNATSVAGRY…DSQTNKPPHP (323 aa)) are mitochondrial matrix. The S100B-binding stretch occupies residues 289–304 (RISVLEALRHPIQVSR). 351–358 (GPPGTGKT) is an ATP binding site. Position 490 is an N6-acetyllysine; alternate (Lys490). Lys490 is subject to N6-succinyllysine; alternate. An N6-acetyllysine mark is found at Lys494 and Lys512. Positions 572 to 591 (KVERPDSQTNKPPHPSLLSC) are disordered.

The protein belongs to the AAA ATPase family. In terms of assembly, can form homooligomers. Homodimer formation at the N-terminus may be regulated by ATP and is required for the interaction with the inner surface of the mitochondrial outer membrane and correct mitochondrial homeostasis. Interacts with components of the mitochondrial ribosome and with other proteins involved in mitochondrial RNA metabolism. May also interact with protein involved in lipid metabolism, including STARD9. May interact with FAM210A. Interacts with GADD45GIP1. Interacts with S100B in a Ca(+2)- and Zn(+2)-dependent manner; this interaction probably occurs in the cytosol prior to mitochondrial targeting. S100B could assist ATAD3A cytoplasmic processing, preventing aggregation and favoring mitochondrial localization. Interacts with HSP60/HSPD1. Interacts with CLPB. Interacts with EIF2AK3/PERK; ATAD3A and EIF2S1/eIF-2-alpha occupy a common binding site within the cytoplasmic loop of EIF2AK3/PERK, leading to prevent EIF2AK3/PERK association with its substrate EIF2S1/eIF-2-alpha. As to expression, expressed in heart, spleen, kidney, liver and at smaller levels, in lung and muscle (at protein level).

Its subcellular location is the mitochondrion inner membrane. It is found in the mitochondrion matrix. The protein resides in the mitochondrion nucleoid. It catalyses the reaction ATP + H2O = ADP + phosphate + H(+). In terms of biological role, essential for mitochondrial network organization, mitochondrial metabolism and cell growth at organism and cellular level. May play an important role in mitochondrial protein synthesis. May also participate in mitochondrial DNA replication. May bind to mitochondrial DNA D-loops and contribute to nucleoid stability. Required for enhanced channeling of cholesterol for hormone-dependent steroidogenesis. Involved in mitochondrial-mediated antiviral innate immunity. Required to protect mitochondria from the PERK-mediated unfolded protein response: specifically inhibits the activity of EIF2AK3/PERK at mitochondria-endoplasmic reticulum contact sites, thereby providing a safe haven for mitochondrial protein translation during endoplasmic reticulum stress. Ability to inhibit EIF2AK3/PERK is independent of its ATPase activity. Also involved in the mitochondrial DNA damage response by promoting signaling between damaged genomes and the mitochondrial membrane, leading to activation of the integrated stress response (ISR). This chain is ATPase family AAA domain-containing protein 3A (Atad3a), found in Mus musculus (Mouse).